The sequence spans 209 residues: Kynurenine formamidase (209 aa).

Substrate is bound at residue Trp18. Zn(2+)-binding residues include His48, His52, and Asp54. The active-site Proton donor/acceptor is the His58. Positions 160 and 172 each coordinate Zn(2+).

Belongs to the Cyclase 1 superfamily. KynB family. In terms of assembly, homodimer. Zn(2+) is required as a cofactor.

It catalyses the reaction N-formyl-L-kynurenine + H2O = L-kynurenine + formate + H(+). It participates in amino-acid degradation; L-tryptophan degradation via kynurenine pathway; L-kynurenine from L-tryptophan: step 2/2. In terms of biological role, catalyzes the hydrolysis of N-formyl-L-kynurenine to L-kynurenine, the second step in the kynurenine pathway of tryptophan degradation. This is Kynurenine formamidase from Maricaulis maris (strain MCS10) (Caulobacter maris).